The primary structure comprises 239 residues: Serine protease SplF (239 aa).

The signal sequence occupies residues 1 to 36; that stretch reads MNKNIIIKSIAALTILTSVTGVGTTMVEGIQQTAKA. Residues His-75, Asp-114, and Ser-192 each act as charge relay system in the active site.

This sequence belongs to the peptidase S1B family.

It localises to the secreted. This Staphylococcus aureus (strain Mu50 / ATCC 700699) protein is Serine protease SplF (splF).